The chain runs to 69 residues: Large ribosomal subunit protein uL29 (69 aa).

The protein belongs to the universal ribosomal protein uL29 family.

The protein is Large ribosomal subunit protein uL29 (rpmC) of Lactococcus lactis subsp. lactis (strain IL1403) (Streptococcus lactis).